The chain runs to 338 residues: Glycerol-3-phosphate dehydrogenase [NAD(P)+] (338 aa).

Residues S14, Y15, H35, and K109 each contribute to the NADPH site. Sn-glycerol 3-phosphate contacts are provided by K109, G138, and T140. A142 contributes to the NADPH binding site. Sn-glycerol 3-phosphate contacts are provided by K194, D247, S257, R258, and N259. K194 acts as the Proton acceptor in catalysis. Residue R258 participates in NADPH binding. NADPH contacts are provided by V282 and E284.

This sequence belongs to the NAD-dependent glycerol-3-phosphate dehydrogenase family.

The protein localises to the cytoplasm. It catalyses the reaction sn-glycerol 3-phosphate + NAD(+) = dihydroxyacetone phosphate + NADH + H(+). It carries out the reaction sn-glycerol 3-phosphate + NADP(+) = dihydroxyacetone phosphate + NADPH + H(+). The protein operates within membrane lipid metabolism; glycerophospholipid metabolism. In terms of biological role, catalyzes the reduction of the glycolytic intermediate dihydroxyacetone phosphate (DHAP) to sn-glycerol 3-phosphate (G3P), the key precursor for phospholipid synthesis. The sequence is that of Glycerol-3-phosphate dehydrogenase [NAD(P)+] from Shewanella frigidimarina (strain NCIMB 400).